The following is a 289-amino-acid chain: Bifunctional protein FolD (289 aa).

NADP(+) is bound by residues 165-167 (GAS) and serine 190.

This sequence belongs to the tetrahydrofolate dehydrogenase/cyclohydrolase family. Homodimer.

The enzyme catalyses (6R)-5,10-methylene-5,6,7,8-tetrahydrofolate + NADP(+) = (6R)-5,10-methenyltetrahydrofolate + NADPH. The catalysed reaction is (6R)-5,10-methenyltetrahydrofolate + H2O = (6R)-10-formyltetrahydrofolate + H(+). It functions in the pathway one-carbon metabolism; tetrahydrofolate interconversion. Functionally, catalyzes the oxidation of 5,10-methylenetetrahydrofolate to 5,10-methenyltetrahydrofolate and then the hydrolysis of 5,10-methenyltetrahydrofolate to 10-formyltetrahydrofolate. The protein is Bifunctional protein FolD of Ralstonia nicotianae (strain ATCC BAA-1114 / GMI1000) (Ralstonia solanacearum).